The sequence spans 564 residues: Proline--tRNA ligase (564 aa).

This sequence belongs to the class-II aminoacyl-tRNA synthetase family. ProS type 1 subfamily. Homodimer.

The protein localises to the cytoplasm. The catalysed reaction is tRNA(Pro) + L-proline + ATP = L-prolyl-tRNA(Pro) + AMP + diphosphate. In terms of biological role, catalyzes the attachment of proline to tRNA(Pro) in a two-step reaction: proline is first activated by ATP to form Pro-AMP and then transferred to the acceptor end of tRNA(Pro). As ProRS can inadvertently accommodate and process non-cognate amino acids such as alanine and cysteine, to avoid such errors it has two additional distinct editing activities against alanine. One activity is designated as 'pretransfer' editing and involves the tRNA(Pro)-independent hydrolysis of activated Ala-AMP. The other activity is designated 'posttransfer' editing and involves deacylation of mischarged Ala-tRNA(Pro). The misacylated Cys-tRNA(Pro) is not edited by ProRS. This chain is Proline--tRNA ligase, found in Coxiella burnetii (strain RSA 331 / Henzerling II).